Here is a 774-residue protein sequence, read N- to C-terminus: Formin-like protein 13 (774 aa).

Positions 1 to 22 (MRRRVALSTAIALLVGAQLCVA) are cleaved as a signal peptide. A compositionally biased stretch (pro residues) spans 51 to 67 (PPPPMSGSEAVPPPPPA). Residues 51 to 78 (PPPPMSGSEAVPPPPPAAAASATTGGGR) are disordered. Residues 68–78 (AAASATTGGGR) are compositionally biased toward low complexity. A helical transmembrane segment spans residues 89 to 109 (IALSAGLVALAVASYSCCLLL). 4 disordered regions span residues 130 to 163 (AAAAVAARVPSDVGSSSRQHRSPPPSSTASDAIY), 176 to 338 (HEKS…HLKP), 374 to 402 (FLNSGGGGAGSSDPAARRGGSGKQERRLL), and 740 to 774 (GSGKSFRVPAGTSLPPHRNENRRVLSSSDEDSSSS). Positions 194–216 (DLRPLPPLKRPESQPPPPPPSTP) are enriched in pro residues. A compositionally biased stretch (low complexity) spans 242–261 (SSFSRSTSQHSTLEQTAMPP). Residues 262 to 286 (MAAPAPPQTNPPRPVRPPPPPPPPR) show a composition bias toward pro residues. Residues 326–749 (GAARPPKPPH…GSGKSFRVPA (424 aa)) form the FH2 domain.

The protein belongs to the formin-like family. Class-I subfamily.

It is found in the membrane. This is Formin-like protein 13 (FH13) from Oryza sativa subsp. japonica (Rice).